The sequence spans 384 residues: tRNA-specific 2-thiouridylase MnmA (384 aa).

Residues 13 to 20 (GLSGGVDS) and M39 each bind ATP. An interaction with target base in tRNA region spans residues 99 to 101 (NPD). C104 functions as the Nucleophile in the catalytic mechanism. A disulfide bridge connects residues C104 and C215. An ATP-binding site is contributed by G128. The segment at 165-167 (KDQ) is interaction with tRNA. C215 functions as the Cysteine persulfide intermediate in the catalytic mechanism. Residues 333–334 (RY) form an interaction with tRNA region.

The protein belongs to the MnmA/TRMU family.

It localises to the cytoplasm. The catalysed reaction is S-sulfanyl-L-cysteinyl-[protein] + uridine(34) in tRNA + AH2 + ATP = 2-thiouridine(34) in tRNA + L-cysteinyl-[protein] + A + AMP + diphosphate + H(+). Catalyzes the 2-thiolation of uridine at the wobble position (U34) of tRNA, leading to the formation of s(2)U34. The protein is tRNA-specific 2-thiouridylase MnmA of Albidiferax ferrireducens (strain ATCC BAA-621 / DSM 15236 / T118) (Rhodoferax ferrireducens).